We begin with the raw amino-acid sequence, 110 residues long: MSELKTVGLFAITALAEIAGCYLPYLWLREGKSIWLLIPGALSLVAFVWLLSLHPTAAGRTYAAYGGVYISMAILWLWTVNGIRPTTWDIVGSVVALIGMAIIMFAPRSV.

The next 4 membrane-spanning stretches (helical) occupy residues 7–27 (VGLF…PYLW), 33–53 (SIWL…LLSL), 63–83 (AAYG…VNGI), and 87–107 (TWDI…MFAP).

Belongs to the UPF0060 family.

The protein localises to the cell inner membrane. The polypeptide is UPF0060 membrane protein Psyc_0916 (Psychrobacter arcticus (strain DSM 17307 / VKM B-2377 / 273-4)).